Reading from the N-terminus, the 589-residue chain is Delta-like protein 3 (589 aa).

The first 32 residues, 1-32 (MVSLQVSSLPQTLILAFLLPQALPAGVFELQI), serve as a signal peptide directing secretion. Over 33-494 (HSFGPGPGPG…LRQADSQRFL (462 aa)) the chain is Extracellular. The DSL domain maps to 174-213 (ARCEPPAVGAACARLCRSRSAPSRCGPGLRPCTPFPDECE). 6 consecutive EGF-like domains span residues 218 to 251 (SLTV…PLCT), 276 to 312 (GPGP…PRCE), 314 to 353 (SGVT…SNCE), 355 to 391 (RVDR…PRCE), 393 to 429 (DLDD…RDCR), and 431 to 467 (RADP…VRCE). Disulfide bonds link Cys222–Cys233, Cys226–Cys239, Cys241–Cys250, Cys280–Cys291, Cys285–Cys300, Cys302–Cys311, Cys318–Cys329, Cys323–Cys341, Cys343–Cys352, Cys359–Cys370, Cys364–Cys379, Cys381–Cys390, Cys397–Cys408, Cys402–Cys417, Cys419–Cys428, Cys435–Cys446, Cys440–Cys455, and Cys457–Cys466. The chain crosses the membrane as a helical span at residues 495–515 (LPPALGLLAAAALAGAALLLI). Residues 516–589 (HVRRRGPGRD…PAPSIYAREA (74 aa)) are Cytoplasmic-facing. Residues 552–574 (QDGAGDGPTSSADWNHPEDGDSR) form a disordered region.

Can bind and activate Notch-1 or another Notch receptor. In terms of processing, ubiquitinated by MIB (MIB1 or MIB2), leading to its endocytosis and subsequent degradation.

It is found in the membrane. Functionally, inhibits primary neurogenesis. May be required to divert neurons along a specific differentiation pathway. Plays a role in the formation of somite boundaries during segmentation of the paraxial mesoderm. The protein is Delta-like protein 3 (Dll3) of Rattus norvegicus (Rat).